The following is a 488-amino-acid chain: WD repeat-containing protein slp1 (488 aa).

Disordered regions lie at residues 1–29 (MEIA…PNSP) and 74–93 (CGSP…FIPS). Residues 7–17 (SSTISPTFSTP) are compositionally biased toward low complexity. 7 WD repeats span residues 178 to 215 (IDDY…VSAL), 219 to 258 (DEST…KLRT), 261 to 298 (GHQA…HQIG), 302 to 341 (GHSS…PKFT), 344 to 386 (NHNA…RVNT), 388 to 429 (DAGS…LTKQ), and 434 to 473 (AHDT…HVKR).

Belongs to the WD repeat CDC20/Fizzy family. In terms of assembly, interacts with cdc13, mad3 and mes1.

Required for mad2-dependent spindle checkpoint activation. Promotes ubiquitin-dependent degradation of cdc13 by the anaphase promoting complex/cyclosome (APC/C). This is WD repeat-containing protein slp1 (slp1) from Schizosaccharomyces pombe (strain 972 / ATCC 24843) (Fission yeast).